The chain runs to 320 residues: Undecaprenyl-diphosphatase (320 aa).

A run of 8 helical transmembrane segments spans residues 9-29 (FVLV…LEVF), 82-102 (GVAF…WYFW), 130-150 (LGII…KKLI), 161-181 (LGAI…GEKL), 191-211 (LTMQ…IPGV), 236-256 (FLLG…DVFA), 265-285 (LPLI…IAGL), and 296-316 (VFIW…SAGI).

The protein belongs to the UppP family.

Its subcellular location is the cell inner membrane. It catalyses the reaction di-trans,octa-cis-undecaprenyl diphosphate + H2O = di-trans,octa-cis-undecaprenyl phosphate + phosphate + H(+). In terms of biological role, catalyzes the dephosphorylation of undecaprenyl diphosphate (UPP). Confers resistance to bacitracin. The chain is Undecaprenyl-diphosphatase from Trichormus variabilis (strain ATCC 29413 / PCC 7937) (Anabaena variabilis).